The primary structure comprises 323 residues: MKTTFLDFEQPIAELEGKIEELRFVQDDSAVDISEEIERLSKKSQQLTKDLYANLSPWQVSQIARHPQRPYTLDYVAELFTDFHELHGDRAFADDVSIVGGLARFGGHPCMVIGHQKGRDTKERAARNFGMPRPEGYRKAERLMRLAEKFGLPIFTFVDTPGAYPGIGAEERGQSEAIGRNLYVMAELKTPIITTVIGEGGSGGALAIAVADTVMMLQFSTYSVISPEGCASILWKSAAKAPEAAEALGLTAHRLKALGLIDKIINEPLGGAHRDPKGMAALLRRALADSLRQFQGMSIDALRERRFERLMAYGKFKETTPGA.

The CoA carboxyltransferase C-terminal domain occupies 39–293; it reads RLSKKSQQLT…RRALADSLRQ (255 aa).

The protein belongs to the AccA family. Acetyl-CoA carboxylase is a heterohexamer composed of biotin carboxyl carrier protein (AccB), biotin carboxylase (AccC) and two subunits each of ACCase subunit alpha (AccA) and ACCase subunit beta (AccD).

It localises to the cytoplasm. The catalysed reaction is N(6)-carboxybiotinyl-L-lysyl-[protein] + acetyl-CoA = N(6)-biotinyl-L-lysyl-[protein] + malonyl-CoA. The protein operates within lipid metabolism; malonyl-CoA biosynthesis; malonyl-CoA from acetyl-CoA: step 1/1. Component of the acetyl coenzyme A carboxylase (ACC) complex. First, biotin carboxylase catalyzes the carboxylation of biotin on its carrier protein (BCCP) and then the CO(2) group is transferred by the carboxyltransferase to acetyl-CoA to form malonyl-CoA. The protein is Acetyl-coenzyme A carboxylase carboxyl transferase subunit alpha of Burkholderia lata (strain ATCC 17760 / DSM 23089 / LMG 22485 / NCIMB 9086 / R18194 / 383).